Consider the following 403-residue polypeptide: 4-hydroxy-3-methylbut-2-en-1-yl diphosphate synthase (ferredoxin) (403 aa).

Positions 312, 315, 346, and 353 each coordinate [4Fe-4S] cluster.

The protein belongs to the IspG family. [4Fe-4S] cluster is required as a cofactor.

The enzyme catalyses (2E)-4-hydroxy-3-methylbut-2-enyl diphosphate + 2 oxidized [2Fe-2S]-[ferredoxin] + H2O = 2-C-methyl-D-erythritol 2,4-cyclic diphosphate + 2 reduced [2Fe-2S]-[ferredoxin] + H(+). Its pathway is isoprenoid biosynthesis; isopentenyl diphosphate biosynthesis via DXP pathway; isopentenyl diphosphate from 1-deoxy-D-xylulose 5-phosphate: step 5/6. Functionally, converts 2C-methyl-D-erythritol 2,4-cyclodiphosphate (ME-2,4cPP) into 1-hydroxy-2-methyl-2-(E)-butenyl 4-diphosphate. The protein is 4-hydroxy-3-methylbut-2-en-1-yl diphosphate synthase (ferredoxin) of Synechocystis sp. (strain ATCC 27184 / PCC 6803 / Kazusa).